The following is a 135-amino-acid chain: Class I hydrophobin 15 (135 aa).

A signal peptide spans 1 to 21; the sequence is MFAKSATIAIVLAALAGFSAA. Intrachain disulfides connect Cys50–Cys113, Cys57–Cys107, Cys58–Cys97, and Cys114–Cys127. Residue Asn131 is glycosylated (N-linked (GlcNAc...) asparagine).

The protein belongs to the fungal hydrophobin family. Self-assembles to form functional amyloid fibrils called rodlets. Self-assembly into fibrillar rodlets occurs spontaneously at hydrophobic:hydrophilic interfaces and the rodlets further associate laterally to form amphipathic monolayers.

It is found in the secreted. The protein localises to the cell wall. Its function is as follows. Aerial growth, conidiation, and dispersal of filamentous fungi in the environment rely upon a capability of their secreting small amphipathic proteins called hydrophobins (HPBs) with low sequence identity. Class I can self-assemble into an outermost layer of rodlet bundles on aerial cell surfaces, conferring cellular hydrophobicity that supports fungal growth, development and dispersal; whereas Class II form highly ordered films at water-air interfaces through intermolecular interactions but contribute nothing to the rodlet structure. This Pleurotus ostreatus (strain PC15) (Oyster mushroom) protein is Class I hydrophobin 15.